A 360-amino-acid polypeptide reads, in one-letter code: MAGNSIGQLFKVTTFGESHGIALGCIVDGVPPNMELSEADLQPDLDRRKPGTSRYTTPRREDDEVQILSGVFEGKTTGTSIGLIIKNGDQRSKDYGDIMDKFRPGHADYTYQQKYGIRDYRGGGRSSARETAMRVAAGAIAKKYLKEQFGVEIRGYLSQIGSVKIDPQTVANIEQIDWQQVNSNPFFCPDPVAVEQFDELIRELKKEGNSIGAKLTVIAENVPVGLGEPVFDRLDADLAHALMSINAVKGVEIGDGFAAVEQKGSEHRDEMTPEGFCSNHSGGILGGISSGQPIIAHIALKPTSSITVPGKSVNVHNEPVEVVTKGRHDPCVGIRAVPIAEAMMAIVVLDHLLRFKAQCR.

NADP(+)-binding residues include R48 and R54. Residues 125–127, 246–247, G286, 301–305, and R327 contribute to the FMN site; these read RSS, NA, and KPTSS.

This sequence belongs to the chorismate synthase family. As to quaternary structure, homotetramer. The cofactor is FMNH2.

It catalyses the reaction 5-O-(1-carboxyvinyl)-3-phosphoshikimate = chorismate + phosphate. Its pathway is metabolic intermediate biosynthesis; chorismate biosynthesis; chorismate from D-erythrose 4-phosphate and phosphoenolpyruvate: step 7/7. Functionally, catalyzes the anti-1,4-elimination of the C-3 phosphate and the C-6 proR hydrogen from 5-enolpyruvylshikimate-3-phosphate (EPSP) to yield chorismate, which is the branch point compound that serves as the starting substrate for the three terminal pathways of aromatic amino acid biosynthesis. This reaction introduces a second double bond into the aromatic ring system. This is Chorismate synthase from Glaesserella parasuis serovar 5 (strain SH0165) (Haemophilus parasuis).